Consider the following 448-residue polypeptide: U-box domain-containing protein 30 (448 aa).

The U-box domain occupies 63–137; it reads DIPSVFICPI…YTWFSQKYVL (75 aa). 2 ARM repeats span residues 179–219 and 221–260; these read LMAR…SLDL and SDSKSGLMQPAKVSLIVDMLNDGSNETKINCARLIRGLVE.

The catalysed reaction is S-ubiquitinyl-[E2 ubiquitin-conjugating enzyme]-L-cysteine + [acceptor protein]-L-lysine = [E2 ubiquitin-conjugating enzyme]-L-cysteine + N(6)-ubiquitinyl-[acceptor protein]-L-lysine.. It functions in the pathway protein modification; protein ubiquitination. In terms of biological role, functions as an E3 ubiquitin ligase. The polypeptide is U-box domain-containing protein 30 (PUB30) (Arabidopsis thaliana (Mouse-ear cress)).